A 116-amino-acid polypeptide reads, in one-letter code: U3-theraphotoxin-Lsp1a (116 aa).

An N-terminal signal peptide occupies residues 1–17 (MKLSTFIIMISLAVALA). A propeptide spanning residues 18 to 50 (TWPSEHIEGSDSETKLNVELGPYALADRAEKGK) is cleaved from the precursor.

Belongs to the neurotoxin 25 family. F7 subfamily. Contains 3 disulfide bonds. In terms of tissue distribution, expressed by the venom gland.

The protein resides in the secreted. The protein is U3-theraphotoxin-Lsp1a of Lasiodora sp. (strain IBSP 8539) (Brazilian salmon pink birdeater).